A 397-amino-acid polypeptide reads, in one-letter code: LIM/homeobox protein Lhx9 (397 aa).

A disordered region spans residues 40-60; sequence RSKTESRLAKGGQMNGRETNM. LIM zinc-binding domains follow at residues 69–130 and 131–193; these read ALCA…RFSV and QRCA…LLQG. A DNA-binding region (homeobox) is located at residues 267–326; that stretch reads TKRMATSFKHHQLRTMKSYFAINHNPDAKDLKQLAQKTGLTKRVLQVWFQNARAKFRRNL. Disordered stretches follow at residues 330-363 and 378-397; these read ENGG…TTLT and SNLD…TNLF. The span at 353-363 shows a compositional bias: low complexity; that stretch reads LTPPGTATTLT. Positions 387-397 are enriched in polar residues; it reads SPSQTTLTNLF.

The protein localises to the nucleus. Functionally, may be involved in gonadal development. The polypeptide is LIM/homeobox protein Lhx9 (LHX9) (Gallus gallus (Chicken)).